A 201-amino-acid polypeptide reads, in one-letter code: Recombination protein RecR (201 aa).

The C4-type zinc-finger motif lies at 60 to 75 (CKYCQSLTEKDVCDIC). One can recognise a Toprim domain in the interval 83-177 (SKLCIIESML…KISRIGFGVP (95 aa)).

This sequence belongs to the RecR family.

In terms of biological role, may play a role in DNA repair. It seems to be involved in an RecBC-independent recombinational process of DNA repair. It may act with RecF and RecO. The polypeptide is Recombination protein RecR (Francisella philomiragia subsp. philomiragia (strain ATCC 25017 / CCUG 19701 / FSC 153 / O#319-036)).